A 164-amino-acid polypeptide reads, in one-letter code: Lipoprotein signal peptidase (164 aa).

The next 3 membrane-spanning stretches (helical) occupy residues 12–32 (WLWL…LILQ), 70–90 (WFFA…MYRS), and 102–122 (ALII…GFVV). Residues aspartate 123 and aspartate 141 contribute to the active site. Residues 137–157 (FNLADTAICVGAALIVLEGFL) traverse the membrane as a helical segment.

This sequence belongs to the peptidase A8 family.

Its subcellular location is the cell inner membrane. The enzyme catalyses Release of signal peptides from bacterial membrane prolipoproteins. Hydrolyzes -Xaa-Yaa-Zaa-|-(S,diacylglyceryl)Cys-, in which Xaa is hydrophobic (preferably Leu), and Yaa (Ala or Ser) and Zaa (Gly or Ala) have small, neutral side chains.. Its pathway is protein modification; lipoprotein biosynthesis (signal peptide cleavage). Its function is as follows. This protein specifically catalyzes the removal of signal peptides from prolipoproteins. The sequence is that of Lipoprotein signal peptidase from Shigella flexneri.